A 534-amino-acid polypeptide reads, in one-letter code: Serine/threonine-protein kinase 35 (534 aa).

A disordered region spans residues V32 to V176. Composition is skewed to low complexity over residues G39 to A65 and P166 to V176. The region spanning Y202 to V530 is the Protein kinase domain. Residues I208–V216 and K231 each bind ATP. The Proton acceptor role is filled by D360.

This sequence belongs to the protein kinase superfamily. Ser/Thr protein kinase family. Interacts with PDLIM1/CLP-36. Autophosphorylated. As to expression, expressed in testis.

Its subcellular location is the nucleus. The protein localises to the nucleolus. It localises to the cytoplasm. The catalysed reaction is L-seryl-[protein] + ATP = O-phospho-L-seryl-[protein] + ADP + H(+). It carries out the reaction L-threonyl-[protein] + ATP = O-phospho-L-threonyl-[protein] + ADP + H(+). The protein is Serine/threonine-protein kinase 35 (STK35) of Homo sapiens (Human).